The chain runs to 91 residues: Gas vesicle protein K (91 aa).

The protein belongs to the gas vesicle GvpK family.

The protein resides in the gas vesicle. Functionally, might be involved in nucleating gas vesicle formation. Gas vesicles are hollow, gas filled proteinaceous nanostructures found in some microorganisms. It is not clear what function gas vesicles perform in soil bacteria. The protein is Gas vesicle protein K of Streptomyces sp. (strain CB03234).